A 325-amino-acid polypeptide reads, in one-letter code: MSETTSWQPSASVANLLKRASIVAAVRRFFTDRGVLEVETPAMSQATVTDVFLYPFQTRFVGPGAADGMTLYLMTSPEYHMKRLLAAGSGPIFQLCRSFRNEESGRHHNPEFTMLEWYRPHYDMYRLMNEVDDLLQQVLDCESAEMLSYQQAFLRHLEIDPLSVDKAQLREAAEKLGLGDIACREDDRDSLVQMLFTFGVEPNIGRDKPAFVYHFPATQASLAEISSEDHRVAERFEVYFKGIELANGFRELTDADEQRQRFEQDNRKRAARGLSQQPIDENLLAALKNGLPECSGVALGVDRLIMLALKAEKLSDVIAFSVERA.

A substrate-binding site is contributed by 76–78 (SPE). Residues 100–102 (RNE) and Asn109 each bind ATP. Position 118 (Tyr118) interacts with substrate. ATP is bound at residue 244-245 (EL). Glu251 is a substrate binding site. ATP is bound at residue Gly300.

Belongs to the class-II aminoacyl-tRNA synthetase family. EpmA subfamily. Homodimer.

The catalysed reaction is D-beta-lysine + L-lysyl-[protein] + ATP = N(6)-((3R)-3,6-diaminohexanoyl)-L-lysyl-[protein] + AMP + diphosphate + H(+). With EpmB is involved in the beta-lysylation step of the post-translational modification of translation elongation factor P (EF-P). Catalyzes the ATP-dependent activation of (R)-beta-lysine produced by EpmB, forming a lysyl-adenylate, from which the beta-lysyl moiety is then transferred to the epsilon-amino group of a conserved specific lysine residue in EF-P. The sequence is that of Elongation factor P--(R)-beta-lysine ligase from Pectobacterium atrosepticum (strain SCRI 1043 / ATCC BAA-672) (Erwinia carotovora subsp. atroseptica).